Reading from the N-terminus, the 294-residue chain is Histone deacetylase HDT3 (294 aa).

Residue methionine 1 is modified to N-acetylmethionine. A required to repress transcription region spans residues 2-5; the sequence is EFWG. The tract at residues 124–269 is disordered; it reads QVNFQLPNED…TPKSAGAFGC (146 aa). Acidic residues predominate over residues 140 to 188; sequence DDADGSEEDSSDDDDSENSGDEEEEKVTAESDSEEDDSSDDEEDDSSEE. The segment covering 189 to 202 has biased composition (basic and acidic residues); sequence ETPKKPEEPKKRSA. Over residues 203 to 213 the composition is skewed to low complexity; that stretch reads EPNSSKNPASN. Positions 252 to 262 are enriched in polar residues; it reads GETSKQQQTPK. The C2H2-type zinc finger occupies 267–290; that stretch reads FGCKSCTRTFTSEMGLQSHTKAKH.

The protein belongs to the histone deacetylase HD2 family. In terms of assembly, interacts with DNMT2. In terms of tissue distribution, expressed in leaves, roots, stems, young plantlets, flowers and siliques. Highest levels in ovules, embryos, shoot apical meristems and first leaves. Also expressed in somatic embryos.

The protein localises to the nucleus. Its subcellular location is the nucleolus. In terms of biological role, probably mediates the deacetylation of lysine residues on the N-terminal part of the core histones (H2A, H2B, H3 and H4). Histone deacetylation gives a tag for epigenetic repression and plays an important role in transcriptional regulation, cell cycle progression and developmental events. Involved in the modulation of abscisic acid and stress-responsive genes. This chain is Histone deacetylase HDT3 (HDT3), found in Arabidopsis thaliana (Mouse-ear cress).